The primary structure comprises 20 residues: 54 kDa cell wall protein (20 aa).

Residues Lys1–Arg20 form a disordered region.

It localises to the secreted. The protein resides in the cell wall. This chain is 54 kDa cell wall protein, found in Arabidopsis thaliana (Mouse-ear cress).